The primary structure comprises 87 residues: Sec-independent protein translocase protein TatA (87 aa).

The chain crosses the membrane as a helical span at residues 1 to 21 (MGSFSIWHWLIVLLIVVMVFG). The tract at residues 40–87 (KDGMKDGSTPEGTPASTTAATPPAGQVTNQQAHAADPGTIDVEAKHKG) is disordered. Residues 46–64 (GSTPEGTPASTTAATPPAG) are compositionally biased toward low complexity.

Belongs to the TatA/E family. In terms of assembly, the Tat system comprises two distinct complexes: a TatABC complex, containing multiple copies of TatA, TatB and TatC subunits, and a separate TatA complex, containing only TatA subunits. Substrates initially bind to the TatABC complex, which probably triggers association of the separate TatA complex to form the active translocon.

The protein localises to the cell inner membrane. Functionally, part of the twin-arginine translocation (Tat) system that transports large folded proteins containing a characteristic twin-arginine motif in their signal peptide across membranes. TatA could form the protein-conducting channel of the Tat system. This Paracidovorax citrulli (strain AAC00-1) (Acidovorax citrulli) protein is Sec-independent protein translocase protein TatA.